Consider the following 30-residue polypeptide: Agglutinin alpha-1 chain (30 aa).

In terms of domain architecture, Jacalin-type lectin spans 1–30 (GVAFDDGSYTGIREINFEYNRETAIGGXQV).

Belongs to the jacalin lectin family. In terms of assembly, tetramer of four alpha chains associated with two or four beta chains.

N-acetyl-galactosamine and D-galactose specific lectin. Binds the Tn-antigen structure GalNAc-alpha-1-O-Ser, the T-antigen structure Gal-beta1-3-GalNAc and IgA. This is Agglutinin alpha-1 chain from Morus nigra (Black mulberry).